The following is a 532-amino-acid chain: Light-independent protochlorophyllide reductase subunit B (532 aa).

Asp36 contacts [4Fe-4S] cluster. The active-site Proton donor is the Asp282. 417–418 contributes to the substrate binding site; it reads GL.

This sequence belongs to the ChlB/BchB/BchZ family. As to quaternary structure, protochlorophyllide reductase is composed of three subunits; BchL, BchN and BchB. Forms a heterotetramer of two BchB and two BchN subunits. [4Fe-4S] cluster serves as cofactor.

It carries out the reaction chlorophyllide a + oxidized 2[4Fe-4S]-[ferredoxin] + 2 ADP + 2 phosphate = protochlorophyllide a + reduced 2[4Fe-4S]-[ferredoxin] + 2 ATP + 2 H2O. Its pathway is porphyrin-containing compound metabolism; bacteriochlorophyll biosynthesis (light-independent). Component of the dark-operative protochlorophyllide reductase (DPOR) that uses Mg-ATP and reduced ferredoxin to reduce ring D of protochlorophyllide (Pchlide) to form chlorophyllide a (Chlide). This reaction is light-independent. The NB-protein (BchN-BchB) is the catalytic component of the complex. This chain is Light-independent protochlorophyllide reductase subunit B, found in Methylobacterium radiotolerans (strain ATCC 27329 / DSM 1819 / JCM 2831 / NBRC 15690 / NCIMB 10815 / 0-1).